The primary structure comprises 590 residues: MSLPGGRGTVKIETRERIWVRRVNGETGVYDTRAGSFETVSCQEFEAAADTVPSVPVFCDRCFGTSLYEVPLTGFGTFVVGTCCIFSPGDPVDDPSIPAHMRKYQQPIEAHQTMVQVAPGTLKYSHQIPMGKVLGYWHVHMEDRVYLNMIGGIDESEDTGKRCVETFTEADIPCALSLGTLDVGLNEVILECSVVVIPARRGCHAKLFTRDTVSDGLEKFCFQSHATLPPTLLASFGSTSESPERKTFYEAHVDALNNYIKLLRTIYSHKGETEIEQYLIEGSKLYSELIGEPSRVLDATMKAAQIAEPQTHTGGADRQRPQRPDGIPYSVPDRFPMTGYPFAPQFCGDPGLVSHYNPFVPPQSFGQGYGPERVGGYYPQPPNPYVLPISYGQQPYPGHPQPHGHHQQRSGGGDLKAELIETLGLAPKTNAVQESLKSFISEILESELKNCGIKRAAGNIERNCDVDEEPPRTKRARPEPKTAVEAIVRAPYGDFDSTALTTKIGQVSDTVEKLNKVIETLLTQSSAQPAPLSTPAQAAPVQPSLPQPVPEPLAPQEPPPPGTSAPTLEASLPQQKPVVSKGAFETLMNL.

Disordered regions lie at residues 306-329 and 528-590; these read IAEP…GIPY and QPAP…LMNL. Residues 543-563 are compositionally biased toward pro residues; sequence PSLPQPVPEPLAPQEPPPPGT.

This is an uncharacterized protein from Ictaluridae (bullhead catfishes).